An 833-amino-acid polypeptide reads, in one-letter code: Glycerol-3-phosphate acyltransferase (833 aa).

Positions 309-314 match the HXXXXD motif motif; the sequence is CHRSHI.

Belongs to the GPAT/DAPAT family.

The protein resides in the cell inner membrane. It carries out the reaction sn-glycerol 3-phosphate + an acyl-CoA = a 1-acyl-sn-glycero-3-phosphate + CoA. Its pathway is phospholipid metabolism; CDP-diacylglycerol biosynthesis; CDP-diacylglycerol from sn-glycerol 3-phosphate: step 1/3. This Pseudomonas savastanoi pv. phaseolicola (strain 1448A / Race 6) (Pseudomonas syringae pv. phaseolicola (strain 1448A / Race 6)) protein is Glycerol-3-phosphate acyltransferase.